We begin with the raw amino-acid sequence, 366 residues long: NADH-quinone oxidoreductase subunit D (366 aa).

Belongs to the complex I 49 kDa subunit family. NDH-1 is composed of 14 different subunits. Subunits NuoB, C, D, E, F, and G constitute the peripheral sector of the complex.

The protein localises to the cell membrane. The catalysed reaction is a quinone + NADH + 5 H(+)(in) = a quinol + NAD(+) + 4 H(+)(out). Its function is as follows. NDH-1 shuttles electrons from NADH, via FMN and iron-sulfur (Fe-S) centers, to quinones in the respiratory chain. The immediate electron acceptor for the enzyme in this species is believed to be a menaquinone. Couples the redox reaction to proton translocation (for every two electrons transferred, four hydrogen ions are translocated across the cytoplasmic membrane), and thus conserves the redox energy in a proton gradient. The chain is NADH-quinone oxidoreductase subunit D from Bacillus thuringiensis (strain Al Hakam).